A 173-amino-acid polypeptide reads, in one-letter code: MVEKRNIFLIGPMGAGKSTIGRQLAQQLNMEFFDSDQEIERLTGADIGWVFDVEGEDGFRSREEKVINELTEKQGIVLATGGGSIKSRETRNRLSARGVVIYLDTTIEKQLVRTKRDKKRPLLQAKIPSREVLEALARERNPLYEEIADITIRANEQSAKVVAYHIISMLERN.

Gly-14–Thr-19 contributes to the ATP binding site. Ser-18 is a Mg(2+) binding site. 3 residues coordinate substrate: Asp-36, Arg-60, and Gly-82. An ATP-binding site is contributed by Arg-120. Arg-140 provides a ligand contact to substrate. Gln-157 contacts ATP.

This sequence belongs to the shikimate kinase family. As to quaternary structure, monomer. Mg(2+) serves as cofactor.

Its subcellular location is the cytoplasm. The enzyme catalyses shikimate + ATP = 3-phosphoshikimate + ADP + H(+). It functions in the pathway metabolic intermediate biosynthesis; chorismate biosynthesis; chorismate from D-erythrose 4-phosphate and phosphoenolpyruvate: step 5/7. Catalyzes the specific phosphorylation of the 3-hydroxyl group of shikimic acid using ATP as a cosubstrate. This Baumannia cicadellinicola subsp. Homalodisca coagulata protein is Shikimate kinase.